Here is a 1158-residue protein sequence, read N- to C-terminus: Nuclear receptor-interacting protein 1 (1158 aa).

The segment at 1 to 415 (MTHGEELGSD…EESSTPTTID (415 aa)) is interaction with ZNF366. Positions 21 to 25 (LEGLL) match the LXXLL motif 1 motif. A disordered region spans residues 33–56 (SGTAVDKKSAGHNEEDQNFNISGS). Basic and acidic residues predominate over residues 37 to 47 (VDKKSAGHNEE). The segment at 78–333 (MLHLKKARLL…HLNGQARTSS (256 aa)) is repression domain 1. Ser104 carries the post-translational modification Phosphoserine. The residue at position 111 (Lys111) is an N6-acetyllysine; alternate. Residue Lys111 forms a Glycyl lysine isopeptide (Lys-Gly) (interchain with G-Cter in SUMO2); alternate linkage. Positions 133 to 137 (LASLL) match the LXXLL motif 2 motif. Position 158 is an N6-acetyllysine (Lys158). Residue Lys170 forms a Glycyl lysine isopeptide (Lys-Gly) (interchain with G-Cter in SUMO2) linkage. The LXXLL motif 3 signature appears at 185–189 (LKTLL). Residues Lys195 and Lys198 each participate in a glycyl lysine isopeptide (Lys-Gly) (interchain with G-Cter in SUMO2) cross-link. Thr207 carries the phosphothreonine modification. Residue Ser218 is modified to Phosphoserine. The LXXLL motif 4 signature appears at 266–270 (LALLL). 2 positions are modified to N6-acetyllysine: Lys286 and Lys310. Ser356 bears the Phosphoserine mark. Lys372 is covalently cross-linked (Glycyl lysine isopeptide (Lys-Gly) (interchain with G-Cter in SUMO2)). Ser378 is subject to Phosphoserine. The short motif at 380 to 384 (LLHLL) is the LXXLL motif 5 element. The interval 393–435 (MNGHSHSERGSIFEESSTPTTIDEYSDNNPSFTDDSSGDESSY) is disordered. Residues 406–435 (EESSTPTTIDEYSDNNPSFTDDSSGDESSY) are compositionally biased toward polar residues. The segment at 410–700 (TPTTIDEYSD…PTGPEPGLSG (291 aa)) is repression domain 2. Residues 431–472 (DESSYSNCVPIDLSCKHRTEKSESDQPVSLDNFTQSLLNTWD) form a required for targeting to small nuclear foci region. Residues 440–446 (PIDLSCK) carry the CTBP-binding; principal site motif. An N6-acetyllysine mark is found at Lys446 and Lys481. Ser487 bears the Phosphoserine mark. The LXXLL motif 6 signature appears at 500–504 (LLQLL). Lys508 participates in a covalent cross-link: Glycyl lysine isopeptide (Lys-Gly) (interchain with G-Cter in SUMO2). Ser518 carries the phosphoserine modification. Lys528 carries the post-translational modification N6-acetyllysine. Residues 540 to 563 (IESPSTNRTTPVSTPPLLTSSKAG) are disordered. Ser542 carries the phosphoserine modification. Positions 548–560 (TTPVSTPPLLTSS) are enriched in low complexity. Ser564 is modified (phosphoserine). 2 consecutive short sequence motifs (CTBP-binding) follow at residues 565 to 569 (PINLS) and 599 to 603 (SMDLT). Disordered stretches follow at residues 592–622 (TNTA…AQNS) and 641–663 (SSMS…DKPI). The span at 601-610 (DLTKSKDPPG) shows a compositional bias: basic and acidic residues. An N6-acetyllysine modification is found at Lys606. Over residues 641–659 (SSMSVEEQRPSKQLLTGNT) the composition is skewed to polar residues. Ser671 carries the phosphoserine modification. An LXXLL motif 7 motif is present at residues 713–717 (LQLLL). Residues 716 to 745 (LLGNPNKGKSEKKEKTPLRDESTQEHSERA) are disordered. Positions 723–745 (GKSEKKEKTPLRDESTQEHSERA) are enriched in basic and acidic residues. The segment at 735–885 (DESTQEHSER…NIVDAANNHS (151 aa)) is repression domain 3. Residues 753 to 1158 (VKIKSEPCDD…SVLTIKKESE (406 aa)) form an interaction with ZNF366 region. Residues Lys756 and Lys802 each participate in a glycyl lysine isopeptide (Lys-Gly) (interchain with G-Cter in SUMO2) cross-link. A Phosphoserine modification is found at Ser807. Positions 819–823 (LSRLL) match the LXXLL motif 8 motif. Glycyl lysine isopeptide (Lys-Gly) (interchain with G-Cter in SUMO2) cross-links involve residues Lys850 and Lys901. Lys931 carries the post-translational modification N6-acetyllysine; alternate. A Glycyl lysine isopeptide (Lys-Gly) (interchain with G-Cter in SUMO2); alternate cross-link involves residue Lys931. The LXXLL motif 9 signature appears at 936-940 (LKQLL). The short motif at 946 to 950 (VRDLS) is the CTBP-binding element. Positions 950 to 974 (SPHRSNSVADSKKKGHKNNVTNSKP) are disordered. Position 1001 is a phosphoserine (Ser1001). Positions 1061–1074 (LTKTNPILYYMLQK) match the Ligand-dependent nuclear receptor binding motif. Glycyl lysine isopeptide (Lys-Gly) (interchain with G-Cter in SUMO2) cross-links involve residues Lys1105, Lys1115, and Lys1154. Residues 1118–1158 (FFNLRSPYNSHMGNNASRPHSANGEVYGLLGSVLTIKKESE) form a repression domain 4 region.

In terms of assembly, interacts with RARA and RXRB homodimers and RARA/RXRB heterodimers in the presence of ligand. Interacts with HDAC1 and HDAC3 via its N-terminal domain. Interacts with NR2C1 (sumoylated form and via the ligand-binding domain); the interaction results in promoting the repressor activity of NR2C1. Interacts with CTBP1, CTBP2, ESR1, HDAC1, HDAC2, HDAC5, HDAC6, NR2C2, NR3C1, NR3C2, YWHAH, JUN and FOS. Found in a complex with both NR3C1 and YWHAH. Interacts with ZNF366. Interacts with RORA. In terms of processing, acetylation regulates its nuclear translocation and corepressive activity. Acetylation abolishes interaction with CTBP1. Phosphorylation enhances interaction with YWHAH.

The protein resides in the nucleus. Functionally, modulates transcriptional activation by steroid receptors such as NR3C1, NR3C2 and ESR1. Also modulates transcriptional repression by nuclear hormone receptors. Positive regulator of the circadian clock gene expression: stimulates transcription of BMAL1, CLOCK and CRY1 by acting as a coactivator for RORA and RORC. Involved in the regulation of ovarian function. Plays a role in renal development. The chain is Nuclear receptor-interacting protein 1 (NRIP1) from Homo sapiens (Human).